The primary structure comprises 337 residues: Glyceraldehyde-3-phosphate dehydrogenase 2 (337 aa).

NADP(+)-binding positions include 11–12 (RI), aspartate 35, arginine 80, and threonine 122. D-glyceraldehyde 3-phosphate contacts are provided by residues 153–155 (SCT), threonine 184, arginine 199, 212–213 (TG), and arginine 235. Cysteine 154 functions as the Nucleophile in the catalytic mechanism. NADP(+) is bound at residue asparagine 317.

In terms of assembly, homotetramer.

The protein resides in the cytoplasm. The catalysed reaction is D-glyceraldehyde 3-phosphate + phosphate + NADP(+) = (2R)-3-phospho-glyceroyl phosphate + NADPH + H(+). It carries out the reaction D-glyceraldehyde 3-phosphate + phosphate + NAD(+) = (2R)-3-phospho-glyceroyl phosphate + NADH + H(+). It functions in the pathway carbohydrate biosynthesis; Calvin cycle. Its function is as follows. Gap2 has a major role in carbon fixation as a component of the Calvin cycle. Catalyzes the oxidative phosphorylation of glyceraldehyde 3-phosphate (G3P) to 1,3-bisphosphoglycerate (BPG) using the cofactor NADP. The first reaction step involves the formation of a hemiacetal intermediate between G3P and a cysteine residue, and this hemiacetal intermediate is then oxidized to a thioester, with concomitant reduction of NADP to NADPH. The reduced NADPH is then exchanged with the second NAD, and the thioester is attacked by a nucleophilic inorganic phosphate to produce BPG. This is Glyceraldehyde-3-phosphate dehydrogenase 2 (gap2) from Nostoc sp. (strain PCC 7120 / SAG 25.82 / UTEX 2576).